The sequence spans 153 residues: Aspartate carbamoyltransferase regulatory chain (153 aa).

Zn(2+) contacts are provided by Cys-109, Cys-114, Cys-138, and Cys-141.

The protein belongs to the PyrI family. Contains catalytic and regulatory chains. Requires Zn(2+) as cofactor.

Functionally, involved in allosteric regulation of aspartate carbamoyltransferase. In Escherichia coli (strain ATCC 8739 / DSM 1576 / NBRC 3972 / NCIMB 8545 / WDCM 00012 / Crooks), this protein is Aspartate carbamoyltransferase regulatory chain.